A 378-amino-acid chain; its full sequence is Glutamate 5-kinase (378 aa).

K20 lines the ATP pocket. The substrate site is built by S60, D147, and N159. ATP is bound by residues 179 to 180 and 221 to 227; these read TD and TGGMATK. Residues 286–364 form the PUA domain; that stretch reads AGDIVIDAGA…QEIYKVLGYE (79 aa).

Belongs to the glutamate 5-kinase family.

The protein resides in the cytoplasm. The enzyme catalyses L-glutamate + ATP = L-glutamyl 5-phosphate + ADP. It functions in the pathway amino-acid biosynthesis; L-proline biosynthesis; L-glutamate 5-semialdehyde from L-glutamate: step 1/2. Catalyzes the transfer of a phosphate group to glutamate to form L-glutamate 5-phosphate. The sequence is that of Glutamate 5-kinase from Photobacterium profundum (strain SS9).